A 269-amino-acid polypeptide reads, in one-letter code: uncharacterized protein (269 aa).

Residues 12–19 (GKGGTGKS) and 130–137 (GYLIVGKS) each bind ATP.

This sequence to M.jannaschii MJ0578.

This is an uncharacterized protein from Methanocaldococcus jannaschii (strain ATCC 43067 / DSM 2661 / JAL-1 / JCM 10045 / NBRC 100440) (Methanococcus jannaschii).